A 182-amino-acid chain; its full sequence is UPF0301 protein NMB1336 (182 aa).

The protein belongs to the UPF0301 (AlgH) family.

The chain is UPF0301 protein NMB1336 from Neisseria meningitidis serogroup B (strain ATCC BAA-335 / MC58).